Here is a 275-residue protein sequence, read N- to C-terminus: Large ribosomal subunit protein uL2c (275 aa).

Positions 225 to 275 (MNPCDHPHGGGEGRSPIGRPRPVSPWGKPALGQRTRKGHKYSDQMILRRRK) are disordered.

The protein belongs to the universal ribosomal protein uL2 family. In terms of assembly, part of the 50S ribosomal subunit.

It localises to the plastid. Its subcellular location is the chloroplast. The polypeptide is Large ribosomal subunit protein uL2c (rpl2) (Oltmannsiellopsis viridis (Marine flagellate)).